Consider the following 206-residue polypeptide: mRNA-decapping protein D9 (206 aa).

One can recognise a Nudix hydrolase domain in the interval 23–206 (KKTHVFAICV…FIYNTLLYSK (184 aa)). The short motif at 104 to 125 (GKLNKSETIDDCIRREIKEETD) is the Nudix box element. Glu110 contacts Mg(2+). The active-site Nucleophile is the Glu119. Residues Glu123 and Asp144 each contribute to the Mg(2+) site.

The protein belongs to the Nudix hydrolase family. Requires Mg(2+) as cofactor. The cofactor is Mn(2+).

Decapping enzyme required for the removal of the 5'-end m7GpppN cap tethered to viral and host mRNAs to allow their decay in cells. May therefore accelerate viral and cellular mRNA turnover to eliminate competing host mRNAs and allow stage-specific synthesis of viral proteins. Acceleration of the turnover of cellular transcripts may even promote the shutoff of host protein synthesis. Does not cleave unmethylated RNAs or RNAs shorter than 24 nucleotides. The polypeptide is mRNA-decapping protein D9 (Oryctolagus cuniculus (Rabbit)).